Reading from the N-terminus, the 259-residue chain is MSGQRLDGKIVIITGGASGIGAEAARLFTDHGAKVVIVDLQEELGQNVAVSIGLDKASFYRCDITDETEVENAVKFTVEKHGKLDVLFSNAGVMEPHGSILDLDLEAFDRTMAVNVRGAAAFIKHAARSMVASGTRGSIVCTTSVTAEIGGPGPHSYTASKHALLGLVRSACGGLGKYGIRVNGVAPYGVATGLTSYNEETVKMVEDYCSATAILKGVVLKARHVADAALFLASDDSVYISGQNLGVDGGYSVVKLTSN.

12–36 (IITGGASGIGAEAARLFTDHGAKVV) is a binding site for NAD(+). Residue serine 144 participates in substrate binding. Tyrosine 157 acts as the Proton acceptor in catalysis.

It belongs to the short-chain dehydrogenases/reductases (SDR) family.

This Arabidopsis thaliana (Mouse-ear cress) protein is Short-chain dehydrogenase reductase 5 (SDR5).